A 302-amino-acid chain; its full sequence is Chloramphenicol resistance protein (302 aa).

The protein localises to the cell membrane. This protein is thought to be a membrane-associated barrier of drug uptake. The sequence is that of Chloramphenicol resistance protein (cml) from Escherichia coli.